The primary structure comprises 104 residues: MIPALFLAAALGGMLRFLLSKIGPYVGTFIANMAACVVLAAVRDASPLVMAAVGTGFAGALSTWSTLAKELGTLIRQRRWAMLLGYTTATILGGMVAVWCGLQI.

The next 3 helical transmembrane spans lie at 22–42 (IGPYVGTFIANMAACVVLAAV), 48–68 (LVMAAVGTGFAGALSTWSTLA), and 82–102 (MLLGYTTATILGGMVAVWCGL). Positions 59 and 62 each coordinate Na(+).

This sequence belongs to the fluoride channel Fluc/FEX (TC 1.A.43) family.

Its subcellular location is the cell membrane. The catalysed reaction is fluoride(in) = fluoride(out). Na(+) is not transported, but it plays an essential structural role and its presence is essential for fluoride channel function. Fluoride-specific ion channel. Important for reducing fluoride concentration in the cell, thus reducing its toxicity. The chain is Fluoride-specific ion channel FluC 2 from Corynebacterium diphtheriae (strain ATCC 700971 / NCTC 13129 / Biotype gravis).